The sequence spans 234 residues: Adenosine 5'-phosphosulfate reductase (234 aa).

4 residues coordinate [4Fe-4S] cluster: C120, C121, C203, and C206. C229 (nucleophile; cysteine thiosulfonate intermediate) is an active-site residue.

This sequence belongs to the PAPS reductase family. CysH subfamily. It depends on [4Fe-4S] cluster as a cofactor.

The protein localises to the cytoplasm. The enzyme catalyses [thioredoxin]-disulfide + sulfite + AMP + 2 H(+) = adenosine 5'-phosphosulfate + [thioredoxin]-dithiol. The protein operates within sulfur metabolism; hydrogen sulfide biosynthesis; sulfite from sulfate. Functionally, catalyzes the formation of sulfite from adenosine 5'-phosphosulfate (APS) using thioredoxin as an electron donor. The polypeptide is Adenosine 5'-phosphosulfate reductase (Bacillus cereus (strain AH187)).